Here is a 178-residue protein sequence, read N- to C-terminus: Probable chorismate pyruvate-lyase (178 aa).

Residues Met37, Arg78, Leu114, and Glu165 each coordinate substrate.

Belongs to the UbiC family.

It is found in the cytoplasm. The enzyme catalyses chorismate = 4-hydroxybenzoate + pyruvate. The protein operates within cofactor biosynthesis; ubiquinone biosynthesis. In terms of biological role, removes the pyruvyl group from chorismate, with concomitant aromatization of the ring, to provide 4-hydroxybenzoate (4HB) for the ubiquinone pathway. This is Probable chorismate pyruvate-lyase from Aeromonas salmonicida (strain A449).